Reading from the N-terminus, the 275-residue chain is NADPH-dependent 7-cyano-7-deazaguanine reductase (275 aa).

81-83 (IES) is a substrate binding site. 83–84 (SK) contacts NADPH. The Thioimide intermediate role is filled by C181. D188 acts as the Proton donor in catalysis. 220 to 221 (HE) is a binding site for substrate. 249-250 (RG) is a binding site for NADPH.

The protein belongs to the GTP cyclohydrolase I family. QueF type 2 subfamily. Homodimer.

It localises to the cytoplasm. It catalyses the reaction 7-aminomethyl-7-carbaguanine + 2 NADP(+) = 7-cyano-7-deazaguanine + 2 NADPH + 3 H(+). It participates in tRNA modification; tRNA-queuosine biosynthesis. In terms of biological role, catalyzes the NADPH-dependent reduction of 7-cyano-7-deazaguanine (preQ0) to 7-aminomethyl-7-deazaguanine (preQ1). This chain is NADPH-dependent 7-cyano-7-deazaguanine reductase, found in Xylella fastidiosa (strain M23).